Consider the following 494-residue polypeptide: Cytochrome P450 2A5 (494 aa).

Phosphoserine is present on S131. The residue at position 379 (K379) is an N6-acetyllysine. Heme is bound at residue C439.

It belongs to the cytochrome P450 family. Heme serves as cofactor. As to expression, liver, with a strong circadian rhythmicity. Circadian expression is regulated by DBP.

It localises to the endoplasmic reticulum membrane. The protein localises to the microsome membrane. The catalysed reaction is an organic molecule + reduced [NADPH--hemoprotein reductase] + O2 = an alcohol + oxidized [NADPH--hemoprotein reductase] + H2O + H(+). Functionally, exhibits a high coumarin 7-hydroxylase activity. The polypeptide is Cytochrome P450 2A5 (Cyp2a5) (Mus musculus (Mouse)).